Consider the following 888-residue polypeptide: CRISPR-associated endonuclease/helicase Cas3 (888 aa).

The HD Cas3-type domain occupies 20-231; it reads KGNDIHLLIY…AGFCSLADWL (212 aa). Aspartate 75 and histidine 160 together coordinate Mg(2+). Positions 301 to 504 constitute a Helicase ATP-binding domain; the sequence is DALPVAPGLT…LDTYGLHTDP (204 aa). 314-321 contributes to the ATP binding site; sequence APTGSGKT. The short motif at 452–455 is the DEAH box element; that stretch reads DEVH. The 180-residue stretch at 556-735 folds into the Helicase C-terminal domain; that stretch reads MLERMIAAAN…AYRQWLDSIY (180 aa).

This sequence in the N-terminal section; belongs to the CRISPR-associated nuclease Cas3-HD family. It in the central section; belongs to the CRISPR-associated helicase Cas3 family. In terms of assembly, interacts with the CasA subunit of Cascade once Cascade has recognized target DNA. It depends on Mg(2+) as a cofactor.

Its function is as follows. CRISPR (clustered regularly interspaced short palindromic repeat), is an adaptive immune system that provides protection against mobile genetic elements (viruses, transposable elements and conjugative plasmids). CRISPR clusters contain sequences complementary to antecedent mobile elements and target invading nucleic acids. CRISPR clusters are transcribed and processed into CRISPR RNA (crRNA). Cas3 plus Cascade participate in CRISPR interference, the third stage of CRISPR immunity. Functionally, acts as an endonuclease, a 3'-5'exonuclease, and an ATP-dependent dsDNA helicase. Anneals and unwinds R-loops (in which crRNA binds the target DNA, displacing the noncomplementary strand). Unwinding requires ATP, annealing does not. Required along with the Cascade complex for resistance to bacteriophage lambda infection as well as the ability to cure CRISPR-encoding high-copy number plasmid. A Cas3-CasA fusion protein purified with the Cascade complex nicks target plasmid in the presence but not absence of Mg(2+), and degrades plasmid fully in the presence of Mg(2+) and ATP, suggesting the helicase activity is required for complete degradation. This chain is CRISPR-associated endonuclease/helicase Cas3 (ygcB), found in Escherichia coli (strain K12).